Here is a 994-residue protein sequence, read N- to C-terminus: Glutamate [NMDA] receptor subunit 1 (994 aa).

An N-terminal signal peptide occupies residues 1–23; it reads MAADGFVYRWLLFGTTIVLLAEA. The Extracellular segment spans residues 24 to 570; sequence AQRHTASDNP…TLVSFLQPFS (547 aa). Residues N255, N311, N342, N394, N451, N478, and N498 are each glycosylated (N-linked (GlcNAc...) asparagine). Glycine-binding positions include 527-529 and R534; that span reads PLT. A helical transmembrane segment spans residues 571 to 591; sequence NTLWILVMVSVHVVALVLYLL. The Cytoplasmic segment spans residues 592–648; that stretch reads DRFSPFGRFKLSHSDSNEEKALNLSSAVWFAWGVLLNSGIGEGTPRSFSARVLGMVW. The helical transmembrane segment at 649–669 threads the bilayer; that stretch reads AGFAMIIVASYTANLAAFLVL. The Extracellular segment spans residues 670-828; that stretch reads ERPKTKLSGI…KTPNTLGLKN (159 aa). The N-linked (GlcNAc...) asparagine glycan is linked to N690. Residues S700 and D744 each contribute to the glycine site. Residues 829-849 traverse the membrane as a helical segment; sequence MAGVFILVGVGIAGGVGLIII. The Cytoplasmic segment spans residues 850–994; it reads EVIYKKHQVK…YTSDVSHLVV (145 aa). A disordered region spans residues 971 to 994; the sequence is RPQQNMLPPRYSPGYTSDVSHLVV. The span at 984–994 shows a compositional bias: polar residues; sequence GYTSDVSHLVV.

Belongs to the glutamate-gated ion channel (TC 1.A.10.1) family. As to quaternary structure, forms a heteromeric NMDA channel with Nmdar2.

Its subcellular location is the cell membrane. The protein localises to the postsynaptic cell membrane. It is found in the postsynaptic density. In terms of biological role, NMDA receptor subtype of glutamate-gated ion channels with high calcium permeability and voltage-dependent sensitivity to magnesium. Mediated by glycine. This protein plays a key role in synaptic plasticity, synaptogenesis, excitotoxicity, memory acquisition and learning. It mediates neuronal functions in glutamate neurotransmission. Is involved in the cell surface targeting of NMDA receptors. Plays a role in associative learning and in long-term memory consolidation. This chain is Glutamate [NMDA] receptor subunit 1, found in Drosophila ananassae (Fruit fly).